The sequence spans 510 residues: NAD(P)H-quinone oxidoreductase subunit 2 A, chloroplastic (510 aa).

The next 13 helical transmembrane spans lie at 26-46, 57-77, 99-119, 124-144, 149-169, 183-203, 227-247, 295-315, 323-343, 354-374, 395-415, 418-438, and 482-502; these read LFDG…ILLL, ISWF…ALLF, IFQF…VEYI, MAIT…MFLC, LITI…LSGY, YLLM…WLYG, PGIL…LSPA, WHLL…LIAI, MLAY…IVGD, YMLF…SFGL, ALSL…SGFF, LHLF…IGLL, and LSMI…NPII.

It belongs to the complex I subunit 2 family. NDH is composed of at least 16 different subunits, 5 of which are encoded in the nucleus.

The protein resides in the plastid. It is found in the chloroplast thylakoid membrane. It catalyses the reaction a plastoquinone + NADH + (n+1) H(+)(in) = a plastoquinol + NAD(+) + n H(+)(out). The enzyme catalyses a plastoquinone + NADPH + (n+1) H(+)(in) = a plastoquinol + NADP(+) + n H(+)(out). Its function is as follows. NDH shuttles electrons from NAD(P)H:plastoquinone, via FMN and iron-sulfur (Fe-S) centers, to quinones in the photosynthetic chain and possibly in a chloroplast respiratory chain. The immediate electron acceptor for the enzyme in this species is believed to be plastoquinone. Couples the redox reaction to proton translocation, and thus conserves the redox energy in a proton gradient. The protein is NAD(P)H-quinone oxidoreductase subunit 2 A, chloroplastic of Glycine max (Soybean).